We begin with the raw amino-acid sequence, 372 residues long: MSLPFLRTLQGDRFFQLLILVGIGLSFFVPFAPKSWPAAIDWHTIITLSGLMLLTKGVELSGYFDVLGRKMVRRFATERRLAMFMVLAAALLSTFLTNDVALFIVVPLTITLKRLCEIPVNRLIIFEALAVNAGSLLTPIGNPQNILIWGRSGLSFAGFIAQMAPLAGAMMLTLLLLCWCCFPGKAMQYHTGVQTPEWKPRLVWSCLGLYIVFLTALEFKQELWGLVIVAAGFALLARRVVLSVDWTLLLVFMAMFIDVHLLTQLPALQGVLGNVSHLSEPGLWLTAIGLSQVISNVPSTILLLNYVPPSLLLVWAVNVGGFGLLPGSLANLIALRMANDRRIWWRFHLYSIPMLLWAALVGYVLLVILPAN.

Over 1 to 13 (MSLPFLRTLQGDR) the chain is Periplasmic. Helical transmembrane passes span 14–34 (FFQLLILVGIGLSFFVPFAPK) and 35–55 (SWPAAIDWHTIITLSGLMLLT). Topologically, residues 56 to 85 (KGVELSGYFDVLGRKMVRRFATERRLAMFM) are periplasmic. Residues 86-106 (VLAAALLSTFLTNDVALFIVV) traverse the membrane as a helical segment. At 107 to 122 (PLTITLKRLCEIPVNR) the chain is on the cytoplasmic side. A helical membrane pass occupies residues 123 to 143 (LIIFEALAVNAGSLLTPIGNP). Topologically, residues 144-155 (QNILIWGRSGLS) are periplasmic. The chain crosses the membrane as a helical span at residues 156-176 (FAGFIAQMAPLAGAMMLTLLL). Residues 177-208 (LCWCCFPGKAMQYHTGVQTPEWKPRLVWSCLG) are Cytoplasmic-facing. Residues 209–229 (LYIVFLTALEFKQELWGLVIV) form a helical membrane-spanning segment. At 230-247 (AAGFALLARRVVLSVDWT) the chain is on the periplasmic side. Residues 248–268 (LLLVFMAMFIDVHLLTQLPAL) traverse the membrane as a helical segment. Residues 269 to 283 (QGVLGNVSHLSEPGL) are Cytoplasmic-facing. Residues 284-304 (WLTAIGLSQVISNVPSTILLL) form a helical membrane-spanning segment. Residues 305 to 309 (NYVPP) are Periplasmic-facing. The chain crosses the membrane as a helical span at residues 310–330 (SLLLVWAVNVGGFGLLPGSLA). Topologically, residues 331–348 (NLIALRMANDRRIWWRFH) are cytoplasmic. Residues 349–369 (LYSIPMLLWAALVGYVLLVIL) form a helical membrane-spanning segment. Residues 370 to 372 (PAN) lie on the Periplasmic side of the membrane.

This sequence belongs to the CitM (TC 2.A.11) transporter family.

The protein localises to the cell inner membrane. The sequence is that of Inner membrane protein YbiR (ybiR) from Escherichia coli (strain K12).